Here is a 283-residue protein sequence, read N- to C-terminus: Protein/nucleic acid deglycase HchA (283 aa).

Zn(2+)-binding residues include histidine 86, glutamate 91, and histidine 123. Cysteine 185 acts as the Nucleophile in catalysis.

This sequence belongs to the peptidase C56 family. HchA subfamily. Homodimer.

The protein resides in the cytoplasm. It catalyses the reaction N(omega)-(1-hydroxy-2-oxopropyl)-L-arginyl-[protein] + H2O = lactate + L-arginyl-[protein] + H(+). The enzyme catalyses N(6)-(1-hydroxy-2-oxopropyl)-L-lysyl-[protein] + H2O = lactate + L-lysyl-[protein] + H(+). It carries out the reaction S-(1-hydroxy-2-oxopropyl)-L-cysteinyl-[protein] + H2O = lactate + L-cysteinyl-[protein] + H(+). The catalysed reaction is N(omega)-(1-hydroxy-2-oxoethyl)-L-arginyl-[protein] + H2O = L-arginyl-[protein] + glycolate + H(+). It catalyses the reaction N(6)-(1-hydroxy-2-oxoethyl)-L-lysyl-[protein] + H2O = glycolate + L-lysyl-[protein] + H(+). The enzyme catalyses S-(1-hydroxy-2-oxoethyl)-L-cysteinyl-[protein] + H2O = glycolate + L-cysteinyl-[protein] + H(+). It carries out the reaction N(2)-(1-hydroxy-2-oxopropyl)-dGTP + H2O = lactate + dGTP + H(+). The catalysed reaction is N(2)-(1-hydroxy-2-oxopropyl)-GTP + H2O = lactate + GTP + H(+). It catalyses the reaction N(2)-(1-hydroxy-2-oxopropyl)-GDP + H2O = lactate + GDP + H(+). The enzyme catalyses N(2)-(1-hydroxy-2-oxopropyl)-GMP + H2O = lactate + GMP + H(+). It carries out the reaction N(2)-(1-hydroxy-2-oxoethyl)-dGTP + H2O = dGTP + glycolate + H(+). The catalysed reaction is N(2)-(1-hydroxy-2-oxoethyl)-GTP + H2O = glycolate + GTP + H(+). It catalyses the reaction N(2)-(1-hydroxy-2-oxoethyl)-GDP + H2O = glycolate + GDP + H(+). The enzyme catalyses N(2)-(1-hydroxy-2-oxoethyl)-GMP + H2O = glycolate + GMP + H(+). It carries out the reaction an N(2)-(1-hydroxy-2-oxopropyl)-guanosine in RNA + H2O = a guanosine in RNA + lactate + H(+). The catalysed reaction is an N(2)-(1-hydroxy-2-oxopropyl)-2'-deoxyguanosine in DNA + H2O = a 2'-deoxyguanosine in DNA + lactate + H(+). It catalyses the reaction an N(2)-(1-hydroxy-2-oxoethyl)-guanosine in RNA + H2O = a guanosine in RNA + glycolate + H(+). The enzyme catalyses an N(2)-(1-hydroxy-2-oxoethyl)-2'-deoxyguanosine in DNA + H2O = a 2'-deoxyguanosine in DNA + glycolate + H(+). In terms of biological role, protein and nucleotide deglycase that catalyzes the deglycation of the Maillard adducts formed between amino groups of proteins or nucleotides and reactive carbonyl groups of glyoxals. Thus, functions as a protein deglycase that repairs methylglyoxal- and glyoxal-glycated proteins, and releases repaired proteins and lactate or glycolate, respectively. Deglycates cysteine, arginine and lysine residues in proteins, and thus reactivates these proteins by reversing glycation by glyoxals. Acts on early glycation intermediates (hemithioacetals and aminocarbinols), preventing the formation of Schiff bases and advanced glycation endproducts (AGE). Also functions as a nucleotide deglycase able to repair glycated guanine in the free nucleotide pool (GTP, GDP, GMP, dGTP) and in DNA and RNA. Is thus involved in a major nucleotide repair system named guanine glycation repair (GG repair), dedicated to reversing methylglyoxal and glyoxal damage via nucleotide sanitization and direct nucleic acid repair. Plays an important role in protecting cells from carbonyl stress. The protein is Protein/nucleic acid deglycase HchA of Escherichia coli O139:H28 (strain E24377A / ETEC).